A 99-amino-acid chain; its full sequence is MFAIIKTSGRQLKVEKDQTIFVEKIDKNEGETITFTDILFINGKIGTPYVENASVTGIIEKQGKAKKIVVYRHNPKSTHKRKLGHRQLFTKVKITELKG.

The protein belongs to the bacterial ribosomal protein bL21 family. As to quaternary structure, part of the 50S ribosomal subunit. Contacts protein L20.

Its function is as follows. This protein binds to 23S rRNA in the presence of protein L20. In Mesomycoplasma hyopneumoniae (strain 232) (Mycoplasma hyopneumoniae), this protein is Large ribosomal subunit protein bL21.